The following is a 488-amino-acid chain: MWENKFAKESLTFDDVLLIPAASDVLPNDADLSVELSERIKLNIPVISAGMDTVTESKMAIAMARQGGLGVIHKNMGIEEQAEEVQKVKRSENGVITNPFYLTPDESVYEAEALMGKYRISGVPIVSDKESRELVGILTNRDLRFIEDFSIKISDVMTKENLITAPVGTTLDEAETILQEHKIEKLPLVENGRLEGLITIKDIEKVLEFPHAAKDAHGRLLAAAAIGTSKDTEIRAQKLVEAGVDALIIDTAHGHSSGVIQEVKKMKEKYPEITIVAGNVATAEATRALFEAGADVVKVGIGPGSICTTRVVAGVGVPQITAIYDCATEARKFGKAIIADGGIKFSGDIIKALAAGGHAVMLGSLLAGTEESPGATEVFQGRQYKVYRGMGSLGAMEKGSNDRYFQEDKTPRKFVPEGIEGRTAYKGPLQDTIYQLMGGVRAGMGYTGSPDLKTLRDEAQFTRMGPAGLAESHPHNVQITKESPNYSF.

2 consecutive CBS domains span residues 95-153 (VITN…SIKI) and 157-213 (MTKE…PHAA). NAD(+)-binding positions include aspartate 250 and 300-302 (GIG). Residues glycine 302 and glycine 304 each coordinate K(+). IMP is bound at residue serine 305. A K(+)-binding site is contributed by cysteine 307. Cysteine 307 acts as the Thioimidate intermediate in catalysis. IMP-binding positions include 340–342 (DGG), 363–364 (GS), and 387–391 (YRGMG). Arginine 403 serves as the catalytic Proton acceptor. Residue glutamate 417 participates in IMP binding. A disordered region spans residues 467-488 (AGLAESHPHNVQITKESPNYSF). Glutamate 471, serine 472, and histidine 473 together coordinate K(+). Positions 475–488 (HNVQITKESPNYSF) are enriched in polar residues.

Belongs to the IMPDH/GMPR family. In terms of assembly, homotetramer. Requires K(+) as cofactor.

It catalyses the reaction IMP + NAD(+) + H2O = XMP + NADH + H(+). Its pathway is purine metabolism; XMP biosynthesis via de novo pathway; XMP from IMP: step 1/1. With respect to regulation, mycophenolic acid (MPA) is a non-competitive inhibitor that prevents formation of the closed enzyme conformation by binding to the same site as the amobile flap. In contrast, mizoribine monophosphate (MZP) is a competitive inhibitor that induces the closed conformation. MPA is a potent inhibitor of mammalian IMPDHs but a poor inhibitor of the bacterial enzymes. MZP is a more potent inhibitor of bacterial IMPDH. In terms of biological role, catalyzes the conversion of inosine 5'-phosphate (IMP) to xanthosine 5'-phosphate (XMP), the first committed and rate-limiting step in the de novo synthesis of guanine nucleotides, and therefore plays an important role in the regulation of cell growth. In Staphylococcus haemolyticus (strain JCSC1435), this protein is Inosine-5'-monophosphate dehydrogenase.